A 683-amino-acid chain; its full sequence is MIEEKLMSEFPCDKPVLVTCGLPYANGSAHIGHLRTYIPADMFVRTLRMMGQETVFVCGSDAHGTPIIVNAEEQKISPRQLVDKYHVQFDSIFKKCGVIFDRYGNTDDPTNHARTKSIVSELQKNGYVYPKEIKVAYCPQCQRGLPDRYVEGVCPYCSSIARGDECDIGCQRHLEPGEILDPKCKVCGSKAEVRTQEHFFFKLSEFGDFLQEYLNTLHATPNAVNYAMEWAKELKDWCITRNLEWGVKYPGHEDLVVYVWVDAPIGYIAFTEEYAKAAGKNWEDLWKGDSRIIHFIGGDIIYHHCIFWPAMLKGAGYTLPWGVVASGMIKVNDKKFSKSRGYIVWVEDDYLAHGFHPDLLRYYILSYTSHTKDINFSWTEFQTKINKELVGSYGNFVNRVLTFIDSKGIDVKGTIDPKISSAIKTAIDMVKTEIGNYEFKKICDSIITLSDVGNTYFQSHEPWKLIKENPAACENVLFNCIQIVKALAILSEPTVPEKAKEIWGMLGYDPATLASARIDDALVPYENRPRPKPSILFTKLEDKKIAEMTKIMDERVKAAEAKLNGKKAEEELEPQLPPITIDDFAKMELRVGKVIASEKIKGSKKLLKNLIDLGEDKPRQIVSGIAEVYTPEEMVGKTVIVIANLKPTKIMGVESNGMILAADSNGATLLTVEKPSEPGTKVR.

The 'HIGH' region motif lies at 23–33 (PYANGSAHIGH). Residues cysteine 154, cysteine 157, cysteine 166, and cysteine 170 each contribute to the Zn(2+) site. A 'KMSKS' region motif is present at residues 335-339 (KFSKS). Lysine 338 lines the ATP pocket. The region spanning 583–683 (DFAKMELRVG…KPSEPGTKVR (101 aa)) is the tRNA-binding domain.

It belongs to the class-I aminoacyl-tRNA synthetase family. MetG type 1 subfamily. In terms of assembly, homodimer. The cofactor is Zn(2+).

Its subcellular location is the cytoplasm. It carries out the reaction tRNA(Met) + L-methionine + ATP = L-methionyl-tRNA(Met) + AMP + diphosphate. Is required not only for elongation of protein synthesis but also for the initiation of all mRNA translation through initiator tRNA(fMet) aminoacylation. The protein is Methionine--tRNA ligase of Methanocella arvoryzae (strain DSM 22066 / NBRC 105507 / MRE50).